A 345-amino-acid polypeptide reads, in one-letter code: Annexin A9 (345 aa).

Annexin repeat units follow at residues 41-112 (FSAD…ALLQ), 113-184 (PAAH…ALAK), 197-266 (NLAA…NLAS), and 270-341 (NTPL…ALCR).

This sequence belongs to the annexin family. In terms of assembly, homodimer.

In terms of biological role, may act as a low affinity receptor for acetylcholine. This Bos taurus (Bovine) protein is Annexin A9 (ANXA9).